A 338-amino-acid polypeptide reads, in one-letter code: Probable G-protein coupled receptor 160 (338 aa).

Residues 1–23 are Extracellular-facing; that stretch reads MTALSSENCSFQYQLRQTNQPLD. An N-linked (GlcNAc...) asparagine glycan is attached at N8. A helical membrane pass occupies residues 24–44; it reads VNYLLFLIILGKILLNILTLG. Topologically, residues 45 to 58 are cytoplasmic; that stretch reads MRRKNTCQNFMEYF. A helical transmembrane segment spans residues 59–79; it reads CISLAFVDLLLLVNISIILYF. At 80 to 93 the chain is on the extracellular side; that stretch reads RDFVLLSIRFTKYH. The chain crosses the membrane as a helical span at residues 94 to 114; that stretch reads ICLFTQIISFTYGFLHYPVFL. Residues 115-136 lie on the Cytoplasmic side of the membrane; the sequence is TACIDYCLNFSKTTKLSFKCQK. Residues 137–157 form a helical membrane-spanning segment; sequence LFYFFTVILIWISVLAYVLGD. The Extracellular segment spans residues 158–177; sequence PAIYQSLKAQNAYSRHCPFY. The helical transmembrane segment at 178–198 threads the bilayer; the sequence is VSIQSYWLSFFMVMILFVAFI. At 199 to 244 the chain is on the cytoplasmic side; sequence TCWEEVTTLVQAIRITSYMNETILYFPFSSHSSYTVRSKKIFLSKL. Residues 245-265 traverse the membrane as a helical segment; that stretch reads IVCFLSTWLPFVLLQVIIVLL. Residues 266 to 268 lie on the Extracellular side of the membrane; that stretch reads KVQ. Residues 269–289 form a helical membrane-spanning segment; that stretch reads IPAYIEMNIPWLYFVNSFLIA. Residues 290–338 are Cytoplasmic-facing; sequence TVYWFNCHKLNLKDIGLPLDPFVNWKCCFIPLTIPNLEQIEKPISIMIC.

Belongs to the G-protein coupled receptor 1 family.

It is found in the cell membrane. Functionally, orphan receptor. In Homo sapiens (Human), this protein is Probable G-protein coupled receptor 160 (GPR160).